A 324-amino-acid chain; its full sequence is Probable pectinesterase A (324 aa).

An N-terminal signal peptide occupies residues 1 to 19 (MHGSLLKLALLSFSLGSSA). A substrate-binding site is contributed by Q142. D165 functions as the Proton donor in the catalytic mechanism. D186 acts as the Nucleophile in catalysis. 2 residues coordinate substrate: R246 and W248. An N-linked (GlcNAc...) asparagine glycan is attached at N285.

Belongs to the pectinesterase family.

It is found in the secreted. The catalysed reaction is [(1-&gt;4)-alpha-D-galacturonosyl methyl ester](n) + n H2O = [(1-&gt;4)-alpha-D-galacturonosyl](n) + n methanol + n H(+). It functions in the pathway glycan metabolism; pectin degradation; 2-dehydro-3-deoxy-D-gluconate from pectin: step 1/5. Involved in maceration and soft-rotting of plant tissue. The sequence is that of Probable pectinesterase A (pmeA) from Aspergillus oryzae (strain ATCC 42149 / RIB 40) (Yellow koji mold).